An 80-amino-acid polypeptide reads, in one-letter code: Serine protease inhibitor Kazal-type 1 (80 aa).

The signal sequence occupies residues 1 to 23; sequence MKVAVIFLLSALALLSLAGNTFS. The region spanning 27-80 is the Kazal-like domain; it reads TGKEASCHDAVAGCPRIYDPVCGTDGITYANECVLCFENRKRIEPVLIRKGGPC. Disulfide bonds link cysteine 33–cysteine 62, cysteine 40–cysteine 59, and cysteine 48–cysteine 80.

In terms of tissue distribution, in the genital tract, expressed only in male accessory glands including seminal vesicle, coagulating gland and prostate.

Its subcellular location is the secreted. In terms of biological role, serine protease inhibitor which exhibits anti-trypsin activity. In the pancreas, protects against trypsin-catalyzed premature activation of zymogens. Its function is as follows. In the male reproductive tract, binds to sperm heads where it modulates sperm capacitance by inhibiting calcium uptake and nitrogen oxide (NO) production. The chain is Serine protease inhibitor Kazal-type 1 from Mus musculus (Mouse).